We begin with the raw amino-acid sequence, 304 residues long: Release factor glutamine methyltransferase (304 aa).

S-adenosyl-L-methionine contacts are provided by Asp144 and Asn188. 188–191 (NPPY) is a binding site for substrate.

It belongs to the protein N5-glutamine methyltransferase family. PrmC subfamily.

The enzyme catalyses L-glutaminyl-[peptide chain release factor] + S-adenosyl-L-methionine = N(5)-methyl-L-glutaminyl-[peptide chain release factor] + S-adenosyl-L-homocysteine + H(+). Methylates the class 1 translation termination release factors RF1/PrfA and RF2/PrfB on the glutamine residue of the universally conserved GGQ motif. This chain is Release factor glutamine methyltransferase, found in Mycobacterium tuberculosis (strain CDC 1551 / Oshkosh).